The sequence spans 562 residues: Bacillolysin (562 aa).

Positions 1 to 24 are cleaved as a signal peptide; the sequence is MKKKKQALKVLLSVGILSSSFAFA. Residues 25–245 constitute a propeptide, activation peptide; that stretch reads HTSSAAPNNV…KQAAKPAAKP (221 aa). Asp-303, Asp-305, and Asp-384 together coordinate Ca(2+). His-388 contacts Zn(2+). Glu-389 is a catalytic residue. The Zn(2+) site is built by His-392 and Glu-412. Ca(2+) contacts are provided by Glu-423, Asn-429, Asp-431, Glu-433, Glu-436, Tyr-439, Thr-440, and Asp-446. The active-site Proton donor is the His-477.

This sequence belongs to the peptidase M4 family. Ca(2+) is required as a cofactor. Requires Zn(2+) as cofactor.

The protein localises to the secreted. The enzyme catalyses Similar, but not identical, to that of thermolysin.. Extracellular zinc metalloprotease. The protein is Bacillolysin (nprM) of Priestia megaterium (strain DSM 319 / IMG 1521) (Bacillus megaterium).